Consider the following 260-residue polypeptide: UPF0246 protein Bxeno_A1262 (260 aa).

This sequence belongs to the UPF0246 family.

This chain is UPF0246 protein Bxeno_A1262, found in Paraburkholderia xenovorans (strain LB400).